A 553-amino-acid polypeptide reads, in one-letter code: Methionine--tRNA ligase (553 aa).

Residues 12 to 22 (PYANSQLHLGH) carry the 'HIGH' region motif. Zn(2+)-binding residues include Cys144, Cys147, Cys157, and Cys160. Residues 332 to 336 (KFSKS) carry the 'KMSKS' region motif. Lys335 provides a ligand contact to ATP.

Belongs to the class-I aminoacyl-tRNA synthetase family. MetG type 1 subfamily. In terms of assembly, monomer. Zn(2+) serves as cofactor.

The protein resides in the cytoplasm. It carries out the reaction tRNA(Met) + L-methionine + ATP = L-methionyl-tRNA(Met) + AMP + diphosphate. Functionally, is required not only for elongation of protein synthesis but also for the initiation of all mRNA translation through initiator tRNA(fMet) aminoacylation. This Dehalococcoides mccartyi (strain ATCC BAA-2100 / JCM 16839 / KCTC 5957 / BAV1) protein is Methionine--tRNA ligase.